The sequence spans 426 residues: Enolase (426 aa).

Glutamine 163 contacts (2R)-2-phosphoglycerate. The active-site Proton donor is the glutamate 205. Mg(2+)-binding residues include aspartate 242, glutamate 283, and aspartate 310. Lysine 335, arginine 364, serine 365, and lysine 386 together coordinate (2R)-2-phosphoglycerate. Lysine 335 acts as the Proton acceptor in catalysis.

This sequence belongs to the enolase family. Mg(2+) serves as cofactor.

It is found in the cytoplasm. Its subcellular location is the secreted. The protein localises to the cell surface. The catalysed reaction is (2R)-2-phosphoglycerate = phosphoenolpyruvate + H2O. It functions in the pathway carbohydrate degradation; glycolysis; pyruvate from D-glyceraldehyde 3-phosphate: step 4/5. Functionally, catalyzes the reversible conversion of 2-phosphoglycerate (2-PG) into phosphoenolpyruvate (PEP). It is essential for the degradation of carbohydrates via glycolysis. This Cutibacterium acnes (strain DSM 16379 / KPA171202) (Propionibacterium acnes) protein is Enolase.